The chain runs to 476 residues: Chromosomal replication initiator protein DnaA (476 aa).

The tract at residues 1 to 87 (MSESSHVGLW…LMYNVLVDKS (87 aa)) is domain I, interacts with DnaA modulators. The domain II stretch occupies residues 87–130 (SSGATVNQESTTRSTAIPQSGLPRVDERKAPGLLRAPAVQDLDP). Residues 131–348 (HLNPNYNFET…GIVISIMAHS (218 aa)) are domain III, AAA+ region. ATP is bound by residues G176, G178, K179, and T180. The tract at residues 349 to 476 (TIYNKEIDLD…KKRNVSNGER (128 aa)) is domain IV, binds dsDNA.

It belongs to the DnaA family. Oligomerizes as a right-handed, spiral filament on DNA at oriC.

Its subcellular location is the cytoplasm. Plays an essential role in the initiation and regulation of chromosomal replication. ATP-DnaA binds to the origin of replication (oriC) to initiate formation of the DNA replication initiation complex once per cell cycle. Binds the DnaA box (a 9 base pair repeat at the origin) and separates the double-stranded (ds)DNA. Forms a right-handed helical filament on oriC DNA; dsDNA binds to the exterior of the filament while single-stranded (ss)DNA is stabiized in the filament's interior. The ATP-DnaA-oriC complex binds and stabilizes one strand of the AT-rich DNA unwinding element (DUE), permitting loading of DNA polymerase. After initiation quickly degrades to an ADP-DnaA complex that is not apt for DNA replication. Binds acidic phospholipids. The chain is Chromosomal replication initiator protein DnaA from Bacteroides fragilis (strain YCH46).